Consider the following 191-residue polypeptide: Phosphoheptose isomerase (191 aa).

The SIS domain maps to 37 to 191 (IAESFKQDGK…IIQLIEKEME (155 aa)). 52–54 (NGG) is a binding site for substrate. His61 and Glu65 together coordinate Zn(2+). Substrate-binding positions include Glu65, 93–94 (ND), 119–121 (STS), Ser124, and Gln172. Zn(2+)-binding residues include Gln172 and His180.

The protein belongs to the SIS family. GmhA subfamily. As to quaternary structure, homotetramer. It depends on Zn(2+) as a cofactor.

It localises to the cytoplasm. It catalyses the reaction 2 D-sedoheptulose 7-phosphate = D-glycero-alpha-D-manno-heptose 7-phosphate + D-glycero-beta-D-manno-heptose 7-phosphate. Its pathway is carbohydrate biosynthesis; D-glycero-D-manno-heptose 7-phosphate biosynthesis; D-glycero-alpha-D-manno-heptose 7-phosphate and D-glycero-beta-D-manno-heptose 7-phosphate from sedoheptulose 7-phosphate: step 1/1. It functions in the pathway bacterial outer membrane biogenesis; LPS core biosynthesis. Functionally, catalyzes the isomerization of sedoheptulose 7-phosphate in D-glycero-D-manno-heptose 7-phosphate. This Vibrio vulnificus (strain CMCP6) protein is Phosphoheptose isomerase.